A 515-amino-acid chain; its full sequence is Maturase K (515 aa).

Belongs to the intron maturase 2 family. MatK subfamily.

The protein localises to the plastid. Its subcellular location is the chloroplast. Its function is as follows. Usually encoded in the trnK tRNA gene intron. Probably assists in splicing its own and other chloroplast group II introns. The polypeptide is Maturase K (Alpinia calcarata (Snap ginger)).